The sequence spans 118 residues: Large ribosomal subunit protein bL19 (118 aa).

The protein belongs to the bacterial ribosomal protein bL19 family.

Functionally, this protein is located at the 30S-50S ribosomal subunit interface and may play a role in the structure and function of the aminoacyl-tRNA binding site. The protein is Large ribosomal subunit protein bL19 of Nautilia profundicola (strain ATCC BAA-1463 / DSM 18972 / AmH).